Consider the following 156-residue polypeptide: Small ribosomal subunit protein uS7 (156 aa).

It belongs to the universal ribosomal protein uS7 family. In terms of assembly, part of the 30S ribosomal subunit. Contacts proteins S9 and S11.

In terms of biological role, one of the primary rRNA binding proteins, it binds directly to 16S rRNA where it nucleates assembly of the head domain of the 30S subunit. Is located at the subunit interface close to the decoding center, probably blocks exit of the E-site tRNA. The chain is Small ribosomal subunit protein uS7 from Klebsiella pneumoniae (strain 342).